The primary structure comprises 197 residues: Rac-like GTP-binding protein 5 (197 aa).

A GTP-binding site is contributed by 13–20; the sequence is GDGAVGKT. Residues 35 to 43 carry the Effector region motif; sequence YVPTVFDNF. Residues 60 to 64 and 118 to 121 each bind GTP; these read DTAGQ and TKLD. A Cysteine methyl ester modification is found at cysteine 194. Cysteine 194 is lipidated: S-geranylgeranyl cysteine. Residues 195–197 constitute a propeptide, removed in mature form; it reads AIL.

The protein belongs to the small GTPase superfamily. Rho family.

The protein resides in the cytoplasm. It is found in the membrane. Inactive GDP-bound Rho GTPases reside in the cytosol, are found in a complex with Rho GDP-dissociation inhibitors (Rho GDIs), and are released from the GDI protein in order to translocate to membranes upon activation. This Oryza sativa subsp. japonica (Rice) protein is Rac-like GTP-binding protein 5 (RAC5).